Reading from the N-terminus, the 469-residue chain is Cold shock protein CS66 (469 aa).

Tandem repeats lie at residues 9–31 (GEKKGIMEKIKEKLPGGHGDHKE), 49–62 (TGGAYGQEGHTGTT), 72–94 (GEKKGVMENIKDKLPGGHADHQQ), 95–108 (TGGTYGQQGHTGTA), 115–128 (TGGTYGQQGHTGTA), 135–148 (TNGTYGEHGHTGTA), 149–162 (TGGSYGEQRHTGVT), 170–192 (GEKKSLMENIKEKLPGGHGDNQQ), 193–206 (TAGTYGQQGHFATG), 213–226 (TGGTYGEQGHAGVT), 234–256 (GEKKGLMENIKDKLPGGHGDHQQ), 257–270 (TGGTYGQQGHTGAA), 277–290 (GGGTYEQHGHTGMT), 298–320 (GGKKGVMENIKDKLPGGHSDNQQ), 321–334 (TGGAYEQQGHTGAA), 341–354 (SGGTYEQHGHTGMT), 362–384 (GEKKAVMENIKDKLPGGHGDHQQ), 385–398 (TGGAYGQQGHTGTA), 405–418 (GGGTYEQHGNTGMT), 428–441 (TGGTHGQHGHTGTT), and 452–469 (GEKKSLMDKIKDKLPGQH). The 7 X 23 AA approximate repeats stretch occupies residues 9–390 (GEKKGIMEKI…DHQQTGGAYG (382 aa)). The interval 49-441 (TGGAYGQEGH…HGQHGHTGTT (393 aa)) is 14 X 14 AA approximate repeats. Residues 87 to 112 (GGHADHQQTGGTYGQQGHTGTATHGT) are disordered. The span at 93 to 112 (QQTGGTYGQQGHTGTATHGT) shows a compositional bias: low complexity. The segment covering 203–214 (FATGTHGTPATG) has biased composition (low complexity). Positions 203-469 (FATGTHGTPA…KIKDKLPGQH (267 aa)) are disordered. Basic and acidic residues predominate over residues 233–254 (TGEKKGLMENIKDKLPGGHGDH). Residues 255 to 274 (QQTGGTYGQQGHTGAATHGT) are compositionally biased toward low complexity. Residues 288–301 (GMTGTGTHGTGGKK) are compositionally biased toward gly residues. A compositionally biased stretch (basic and acidic residues) spans 302 to 312 (GVMENIKDKLP). Residues 361–382 (TGEKKAVMENIKDKLPGGHGDH) show a composition bias toward basic and acidic residues. Composition is skewed to low complexity over residues 383–402 (QQTGGAYGQQGHTGTATHGT) and 412–429 (HGNTGMTGTETHGTTATG). Residues 439 to 450 (GTTGTGTHGTDG) show a composition bias toward gly residues. Over residues 451–469 (VGEKKSLMDKIKDKLPGQH) the composition is skewed to basic and acidic residues.

It belongs to the plant dehydrin family.

Its function is as follows. May reduce intracellular freezing damage during winter by hydrogen-bonding to the lattice of the nascent ice crystals, thus modifying the structure and/or propagation of ice crystals. This chain is Cold shock protein CS66 (CS66), found in Triticum aestivum (Wheat).